A 418-amino-acid polypeptide reads, in one-letter code: Deubiquitinase and deneddylase Dub1 (418 aa).

The span at Met-1–Lys-10 shows a compositional bias: polar residues. The tract at residues Met-1–Val-23 is disordered. A helical membrane pass occupies residues Thr-40 to Phe-60. The tract at residues Thr-72–Val-144 is disordered. The segment covering Val-86–Pro-141 has biased composition (pro residues). Catalysis depends on residues His-288, Asp-305, and Cys-358.

The protein belongs to the peptidase C48 family.

The protein localises to the secreted. The protein resides in the host cell. Its subcellular location is the membrane. In terms of biological role, effector proteins function to alter host cell physiology and promote bacterial survival in host tissues. This protease possesses deubiquitinating and deneddylating activities. This Chlamydia trachomatis serovar B (strain Jali20/OT) protein is Deubiquitinase and deneddylase Dub1 (cdu1).